A 244-amino-acid polypeptide reads, in one-letter code: Phosphoadenosine 5'-phosphosulfate reductase (244 aa).

Cys239 serves as the catalytic Nucleophile; cysteine thiosulfonate intermediate.

It belongs to the PAPS reductase family. CysH subfamily.

The protein resides in the cytoplasm. The enzyme catalyses [thioredoxin]-disulfide + sulfite + adenosine 3',5'-bisphosphate + 2 H(+) = [thioredoxin]-dithiol + 3'-phosphoadenylyl sulfate. It functions in the pathway sulfur metabolism; hydrogen sulfide biosynthesis; sulfite from sulfate: step 3/3. Catalyzes the formation of sulfite from phosphoadenosine 5'-phosphosulfate (PAPS) using thioredoxin as an electron donor. The polypeptide is Phosphoadenosine 5'-phosphosulfate reductase (Buchnera aphidicola subsp. Acyrthosiphon pisum (strain Tuc7)).